The sequence spans 2194 residues: Nucleosome-remodeling factor subunit NURF301-like (2194 aa).

Residues 1-12 (MAPPRGRSKRKH) are compositionally biased toward basic residues. The disordered stretch occupies residues 1 to 137 (MAPPRGRSKR…EEEESSDDEF (137 aa)). A compositionally biased stretch (basic and acidic residues) spans 60–79 (AQRETPSDAEEVEVKIEEIS). Over residues 80–93 (VRSTPASTPAPKST) the composition is skewed to polar residues. Basic residues predominate over residues 94–112 (SKARGRPKKNPTPPRRKSL). A compositionally biased stretch (acidic residues) spans 118 to 137 (DIIYMDEDSEEEEESSDDEF). DDT domains are found at residues 196–256 (TASI…SDDE) and 341–396 (VGKF…SAVR). A PHD-type 1 zinc finger spans residues 347-392 (DENCRVCGKSSGRVVGCTQCEAAFHVECSHLKPFPEVLVCNICKKN). Disordered regions lie at residues 1091–1122 (ESWLSRNRGGSSEFSHRSSSARKKRPQRSLDN), 1158–1255 (AKRK…PQPN), 1413–1433 (TSNFDAQRAQQQHPQSRPVYS), 1657–1701 (MRQE…SNDS), and 1834–1888 (ESIA…HTPG). Residues 1151 to 1187 (RAEAEKTAKRKLEATRKAQKAKEDEERRRIQQQQQRS) adopt a coiled-coil conformation. A compositionally biased stretch (basic and acidic residues) spans 1158-1179 (AKRKLEATRKAQKAKEDEERRR). Polar residues predominate over residues 1665–1684 (TSGYDSSGNPIRSITSSGDT). A compositionally biased stretch (basic and acidic residues) spans 1852-1861 (KSEDDRDKPE). DDT domains follow at residues 1883–1953 (AFHT…EQER) and 1948–2014 (IEEQ…AEGY). 2 consecutive PHD-type zinc fingers follow at residues 1899–1950 (IEHC…CIEE) and 1959–2010 (ALYC…CTRE). Residues 2030–2134 (QLTRADYTHV…EVFDKKLIDV (105 aa)) form the Bromo domain.

Belongs to the BPTF family. Part of a nucleosome remodeling factor-like (NURF-like) complex containing nurf-1 and isw-1.

Its subcellular location is the nucleus. Histone-binding component of a NURF-like (nucleosome remodeling factor-like) complex, which would catalyze ATP-dependent nucleosome sliding and facilitate transcription of chromatin. Involved in vulval cell fates. The sequence is that of Nucleosome-remodeling factor subunit NURF301-like (nurf-1) from Caenorhabditis elegans.